The primary structure comprises 157 residues: SsrA-binding protein (157 aa).

Residues 130 to 157 (KAEHDKRDTIKEREGKREVERVMKSRHR) are disordered.

This sequence belongs to the SmpB family.

The protein localises to the cytoplasm. Its function is as follows. Required for rescue of stalled ribosomes mediated by trans-translation. Binds to transfer-messenger RNA (tmRNA), required for stable association of tmRNA with ribosomes. tmRNA and SmpB together mimic tRNA shape, replacing the anticodon stem-loop with SmpB. tmRNA is encoded by the ssrA gene; the 2 termini fold to resemble tRNA(Ala) and it encodes a 'tag peptide', a short internal open reading frame. During trans-translation Ala-aminoacylated tmRNA acts like a tRNA, entering the A-site of stalled ribosomes, displacing the stalled mRNA. The ribosome then switches to translate the ORF on the tmRNA; the nascent peptide is terminated with the 'tag peptide' encoded by the tmRNA and targeted for degradation. The ribosome is freed to recommence translation, which seems to be the essential function of trans-translation. This is SsrA-binding protein from Acidovorax sp. (strain JS42).